We begin with the raw amino-acid sequence, 367 residues long: Apolipoprotein A-V (367 aa).

A signal peptide spans 1–20; it reads MAAVITWALALLSVFATVQA. Residue serine 52 is modified to Phosphoserine. A coiled-coil region spans residues 231–255; it reads TRKAKDLHTSIQRNLDQLRDELSTF. The segment at 305–332 is disordered; it reads EEIQHQLAPPPPSHSAFAPELGHSDSNK.

It belongs to the apolipoprotein A1/A4/E family. In terms of assembly, interacts with GPIHBP1. Interacts with SORL1; this interaction leads to APOA5 internalization and sorting either to lysosomes and degradation, or to the trans-Golgi network. Post-translationally, phosphorylated by FAM20C in the extracellular medium. Liver.

Its subcellular location is the secreted. It localises to the early endosome. The protein resides in the late endosome. It is found in the golgi apparatus. The protein localises to the trans-Golgi network. Functionally, minor apolipoprotein mainly associated with HDL and to a lesser extent with VLDL. May also be associated with chylomicrons. Important determinant of plasma triglyceride (TG) levels by both being a potent stimulator of apo-CII lipoprotein lipase (LPL) TG hydrolysis and an inhibitor of the hepatic VLDL-TG production rate (without affecting the VLDL-apoB production rate). Activates poorly lecithin:cholesterol acyltransferase (LCAT) and does not enhance efflux of cholesterol from macrophages. Binds heparin. The polypeptide is Apolipoprotein A-V (Apoa5) (Rattus norvegicus (Rat)).